A 363-amino-acid chain; its full sequence is Aminomethyltransferase (363 aa).

Belongs to the GcvT family. In terms of assembly, the glycine cleavage system is composed of four proteins: P, T, L and H.

It catalyses the reaction N(6)-[(R)-S(8)-aminomethyldihydrolipoyl]-L-lysyl-[protein] + (6S)-5,6,7,8-tetrahydrofolate = N(6)-[(R)-dihydrolipoyl]-L-lysyl-[protein] + (6R)-5,10-methylene-5,6,7,8-tetrahydrofolate + NH4(+). Functionally, the glycine cleavage system catalyzes the degradation of glycine. The chain is Aminomethyltransferase from Staphylococcus haemolyticus (strain JCSC1435).